The following is a 160-amino-acid chain: Large ribosomal subunit protein uL16 (160 aa).

It belongs to the universal ribosomal protein uL16 family. In terms of assembly, part of the 50S ribosomal subunit.

Binds 23S rRNA and is also seen to make contacts with the A and possibly P site tRNAs. In Prochlorococcus marinus (strain MIT 9301), this protein is Large ribosomal subunit protein uL16.